We begin with the raw amino-acid sequence, 39 residues long: Mu-theraphotoxin-Ae1a (39 aa).

3 cysteine pairs are disulfide-bonded: Cys7–Cys21, Cys14–Cys26, and Cys20–Cys33. A Phenylalanine amide modification is found at Phe39.

It belongs to the neurotoxin 10 (Hwtx-1) family. 47 subfamily. In terms of tissue distribution, expressed by the venom gland.

It is found in the secreted. Insecticidal toxin that acts, at least partially, by inhibiting insect voltage-gated sodium (NaV) channels of several insect species. The toxin binds to the voltage sensor in NaV channel domain II and inhibits channel opening by shifting the threshold for channel activation to more positive voltages. The toxin binding is sensitive to residues in the S1-S2 loop of the domain II voltage sensor. In vivo, the recombinant toxin causes paralysis and/or death to two dipteran species (Lucilia cuprina and Drosophila melanogaster). In contrast, the toxin does not show paralytic or lethal effect on the cotton bollworm Helicoverpa armigera and the triatomine bug Rhodinius prolixus. The sequence is that of Mu-theraphotoxin-Ae1a from Augacephalus ezendami (Mozambique baboon spider).